A 187-amino-acid polypeptide reads, in one-letter code: UPF0301 protein VP2612 (187 aa).

The protein belongs to the UPF0301 (AlgH) family.

This is UPF0301 protein VP2612 from Vibrio parahaemolyticus serotype O3:K6 (strain RIMD 2210633).